A 302-amino-acid chain; its full sequence is Proline dehydrogenase 1 (302 aa).

Lys95 lines the substrate pocket. Residue Asp129 is part of the active site. FAD contacts are provided by Met130 and Gln158. Arg179 is an active-site residue. Residues Lys182–Ala184 and Thr221–His222 contribute to the FAD site. Arg283–Arg284 contacts substrate.

It belongs to the proline dehydrogenase family. The cofactor is FAD.

It catalyses the reaction L-proline + a quinone = (S)-1-pyrroline-5-carboxylate + a quinol + H(+). The protein operates within amino-acid degradation; L-proline degradation into L-glutamate; L-glutamate from L-proline: step 1/2. Functionally, converts proline to delta-1-pyrroline-5-carboxylate. In Bacillus subtilis (strain 168), this protein is Proline dehydrogenase 1 (fadM).